The primary structure comprises 508 residues: Steroid 17-alpha-hydroxylase/17,20 lyase (508 aa).

Cys-442 contacts heme.

It belongs to the cytochrome P450 family. Requires heme as cofactor.

The protein resides in the endoplasmic reticulum membrane. It is found in the microsome membrane. It catalyses the reaction a C21-steroid + reduced [NADPH--hemoprotein reductase] + O2 = a 17alpha-hydroxy-C21-steroid + oxidized [NADPH--hemoprotein reductase] + H2O + H(+). The enzyme catalyses progesterone + reduced [NADPH--hemoprotein reductase] + O2 = 17alpha-hydroxyprogesterone + oxidized [NADPH--hemoprotein reductase] + H2O + H(+). It carries out the reaction pregnenolone + reduced [NADPH--hemoprotein reductase] + O2 = 17alpha-hydroxypregnenolone + oxidized [NADPH--hemoprotein reductase] + H2O + H(+). The catalysed reaction is 17alpha-hydroxyprogesterone + reduced [NADPH--hemoprotein reductase] + O2 = androst-4-ene-3,17-dione + acetate + oxidized [NADPH--hemoprotein reductase] + H2O + 2 H(+). It catalyses the reaction 17alpha-hydroxyprogesterone + reduced [NADPH--hemoprotein reductase] + O2 = 16alpha,17alpha-dihydroxyprogesterone + oxidized [NADPH--hemoprotein reductase] + H2O + H(+). The enzyme catalyses 16alpha,17alpha-dihydroxyprogesterone + reduced [NADPH--hemoprotein reductase] + O2 = 6beta,16alpha,17alpha-trihydroxyprogesterone + oxidized [NADPH--hemoprotein reductase] + H2O + H(+). It carries out the reaction 17alpha-hydroxypregnenolone + reduced [NADPH--hemoprotein reductase] + O2 = 3beta-hydroxyandrost-5-en-17-one + acetate + oxidized [NADPH--hemoprotein reductase] + H2O + 2 H(+). The catalysed reaction is 16alpha,17alpha-dihydroxypregnenolone + reduced [NADPH--hemoprotein reductase] + O2 = 3beta,16alpha-dihydroxy-androst-5-en-17-one + acetate + oxidized [NADPH--hemoprotein reductase] + H2O + 2 H(+). It catalyses the reaction 3beta-hydroxyandrost-5-en-17-one + reduced [NADPH--hemoprotein reductase] + O2 = 3beta,16alpha-dihydroxy-androst-5-en-17-one + oxidized [NADPH--hemoprotein reductase] + H2O + H(+). The enzyme catalyses androst-4-ene-3,17-dione + reduced [NADPH--hemoprotein reductase] + O2 = 16alpha-hydroxyandrost-4-ene-3,17-dione + oxidized [NADPH--hemoprotein reductase] + H2O + H(+). The protein operates within steroid hormone biosynthesis. Its pathway is steroid biosynthesis; glucocorticoid biosynthesis. Its activity is regulated as follows. Regulated predominantly by intracellular cAMP levels. The 17,20-lyase activity is stimulated by cytochrome b5, which acts as an allosteric effector increasing the Vmax of the lyase activity. A cytochrome P450 monooxygenase involved in corticoid and androgen biosynthesis. Catalyzes 17-alpha hydroxylation of C21 steroids, which is common for both pathways. A second oxidative step, required only for androgen synthesis, involves an acyl-carbon cleavage. The 17-alpha hydroxy intermediates, as part of adrenal glucocorticoids biosynthesis pathway, are precursors of cortisol. Hydroxylates steroid hormones, pregnenolone and progesterone to form 17-alpha hydroxy metabolites, followed by the cleavage of the C17-C20 bond to form C19 steroids, dehydroepiandrosterone (DHEA) and androstenedione. Has 16-alpha hydroxylase activity. Catalyzes 16-alpha hydroxylation of 17-alpha hydroxy pregnenolone, followed by the cleavage of the C17-C20 bond to form 16-alpha-hydroxy DHEA. Also 16-alpha hydroxylates androgens, relevant for estriol synthesis. Mechanistically, uses molecular oxygen inserting one oxygen atom into a substrate, and reducing the second into a water molecule, with two electrons provided by NADPH via cytochrome P450 reductase (CPR; NADPH-ferrihemoprotein reductase). The polypeptide is Steroid 17-alpha-hydroxylase/17,20 lyase (CYP17A1) (Equus caballus (Horse)).